The primary structure comprises 78 residues: Large ribosomal subunit protein bL28 (78 aa).

The segment at 1-23 (MSRVCQVTGKKPMVGNNRSHAKN) is disordered.

Belongs to the bacterial ribosomal protein bL28 family.

In Shewanella frigidimarina (strain NCIMB 400), this protein is Large ribosomal subunit protein bL28.